A 177-amino-acid polypeptide reads, in one-letter code: NADH-quinone oxidoreductase subunit B (177 aa).

Positions 56, 57, 121, and 151 each coordinate [4Fe-4S] cluster.

Belongs to the complex I 20 kDa subunit family. In terms of assembly, NDH-1 is composed of 14 different subunits. Subunits NuoB, C, D, E, F, and G constitute the peripheral sector of the complex. Requires [4Fe-4S] cluster as cofactor.

Its subcellular location is the cell inner membrane. It catalyses the reaction a quinone + NADH + 5 H(+)(in) = a quinol + NAD(+) + 4 H(+)(out). In terms of biological role, NDH-1 shuttles electrons from NADH, via FMN and iron-sulfur (Fe-S) centers, to quinones in the respiratory chain. Couples the redox reaction to proton translocation (for every two electrons transferred, four hydrogen ions are translocated across the cytoplasmic membrane), and thus conserves the redox energy in a proton gradient. The sequence is that of NADH-quinone oxidoreductase subunit B from Sphingopyxis alaskensis (strain DSM 13593 / LMG 18877 / RB2256) (Sphingomonas alaskensis).